The chain runs to 560 residues: DNA ligase B (560 aa).

The N6-AMP-lysine intermediate role is filled by Lys124.

The protein belongs to the NAD-dependent DNA ligase family. LigB subfamily.

It carries out the reaction NAD(+) + (deoxyribonucleotide)n-3'-hydroxyl + 5'-phospho-(deoxyribonucleotide)m = (deoxyribonucleotide)n+m + AMP + beta-nicotinamide D-nucleotide.. Its function is as follows. Catalyzes the formation of phosphodiester linkages between 5'-phosphoryl and 3'-hydroxyl groups in double-stranded DNA using NAD as a coenzyme and as the energy source for the reaction. This chain is DNA ligase B, found in Escherichia coli (strain K12 / DH10B).